Reading from the N-terminus, the 389-residue chain is Mannitol-1-phosphate 5-dehydrogenase (389 aa).

Position 5 to 16 (5 to 16) interacts with NAD(+); that stretch reads AIQFGGGNIGRG. Residue Lys-214 is part of the active site.

Belongs to the mannitol dehydrogenase family. As to quaternary structure, monomer.

It catalyses the reaction D-mannitol 1-phosphate + NAD(+) = beta-D-fructose 6-phosphate + NADH + H(+). Catalyzes the NAD(H)-dependent interconversion of D-fructose 6-phosphate and D-mannitol 1-phosphate in the mannitol metabolic pathway. The polypeptide is Mannitol-1-phosphate 5-dehydrogenase (Talaromyces marneffei (strain ATCC 18224 / CBS 334.59 / QM 7333) (Penicillium marneffei)).